Consider the following 320-residue polypeptide: o-succinylbenzoate synthase (320 aa).

The Proton donor role is filled by K133. Positions 161, 190, and 213 each coordinate Mg(2+). Residue K235 is the Proton acceptor of the active site.

The protein belongs to the mandelate racemase/muconate lactonizing enzyme family. MenC type 1 subfamily. The cofactor is a divalent metal cation.

The enzyme catalyses (1R,6R)-6-hydroxy-2-succinyl-cyclohexa-2,4-diene-1-carboxylate = 2-succinylbenzoate + H2O. The protein operates within quinol/quinone metabolism; 1,4-dihydroxy-2-naphthoate biosynthesis; 1,4-dihydroxy-2-naphthoate from chorismate: step 4/7. It functions in the pathway quinol/quinone metabolism; menaquinone biosynthesis. Functionally, converts 2-succinyl-6-hydroxy-2,4-cyclohexadiene-1-carboxylate (SHCHC) to 2-succinylbenzoate (OSB). The sequence is that of o-succinylbenzoate synthase from Salmonella dublin (strain CT_02021853).